A 199-amino-acid polypeptide reads, in one-letter code: ATP-dependent Clp protease proteolytic subunit (199 aa).

Catalysis depends on S97, which acts as the Nucleophile. The active site involves H122.

Belongs to the peptidase S14 family. In terms of assembly, fourteen ClpP subunits assemble into 2 heptameric rings which stack back to back to give a disk-like structure with a central cavity, resembling the structure of eukaryotic proteasomes.

The protein resides in the cytoplasm. The enzyme catalyses Hydrolysis of proteins to small peptides in the presence of ATP and magnesium. alpha-casein is the usual test substrate. In the absence of ATP, only oligopeptides shorter than five residues are hydrolyzed (such as succinyl-Leu-Tyr-|-NHMec, and Leu-Tyr-Leu-|-Tyr-Trp, in which cleavage of the -Tyr-|-Leu- and -Tyr-|-Trp bonds also occurs).. Its function is as follows. Cleaves peptides in various proteins in a process that requires ATP hydrolysis. Has a chymotrypsin-like activity. Plays a major role in the degradation of misfolded proteins. The polypeptide is ATP-dependent Clp protease proteolytic subunit (Geotalea uraniireducens (strain Rf4) (Geobacter uraniireducens)).